Here is a 234-residue protein sequence, read N- to C-terminus: Small ribosomal subunit protein uS3 (234 aa).

The KH type-2 domain maps to 39–108; sequence IRKFVKKKLF…TVIVNVVEVK (70 aa). The segment at 212–234 is disordered; sequence KGKNEETNNETADNSRGRRREAK.

This sequence belongs to the universal ribosomal protein uS3 family. Part of the 30S ribosomal subunit. Forms a tight complex with proteins S10 and S14.

Binds the lower part of the 30S subunit head. Binds mRNA in the 70S ribosome, positioning it for translation. This is Small ribosomal subunit protein uS3 from Alkaliphilus metalliredigens (strain QYMF).